The sequence spans 290 residues: Dihydroorotate dehydrogenase B (NAD(+)), catalytic subunit (290 aa).

FMN-binding positions include Ser-17 and Lys-42–Thr-43. Substrate contacts are provided by residues Lys-42, Asn-67 to Leu-71, and Asn-117. Asn-117 serves as a coordination point for FMN. The active-site Nucleophile is the Ser-120. FMN is bound by residues Lys-152 and Ile-177. Asn-178–Thr-179 lines the substrate pocket. FMN is bound by residues Gly-203, Gly-229–Gly-230, and Gly-251–Thr-252.

It belongs to the dihydroorotate dehydrogenase family. Type 1 subfamily. Heterotetramer of 2 PyrK and 2 PyrD type B subunits. Requires FMN as cofactor.

Its subcellular location is the cytoplasm. The enzyme catalyses (S)-dihydroorotate + NAD(+) = orotate + NADH + H(+). The protein operates within pyrimidine metabolism; UMP biosynthesis via de novo pathway; orotate from (S)-dihydroorotate (NAD(+) route): step 1/1. Functionally, catalyzes the conversion of dihydroorotate to orotate with NAD(+) as electron acceptor. The sequence is that of Dihydroorotate dehydrogenase B (NAD(+)), catalytic subunit (pyrD) from Saccharolobus solfataricus (strain ATCC 35092 / DSM 1617 / JCM 11322 / P2) (Sulfolobus solfataricus).